The following is a 237-amino-acid chain: Ankyrin repeat protein 14 (237 aa).

ANK repeat units lie at residues Arg27 to Ile56 and Asn60 to Cys90.

May be involved in virus-host protein interaction through the ankyrin repeats. This is Ankyrin repeat protein 14 from Vaccinia virus (strain Western Reserve) (VACV).